A 165-amino-acid chain; its full sequence is Methylated-DNA--protein-cysteine methyltransferase, constitutive (165 aa).

The active-site Nucleophile; methyl group acceptor is the Cys130.

The protein belongs to the MGMT family.

It is found in the cytoplasm. The catalysed reaction is a 6-O-methyl-2'-deoxyguanosine in DNA + L-cysteinyl-[protein] = S-methyl-L-cysteinyl-[protein] + a 2'-deoxyguanosine in DNA. It carries out the reaction a 4-O-methyl-thymidine in DNA + L-cysteinyl-[protein] = a thymidine in DNA + S-methyl-L-cysteinyl-[protein]. Involved in the cellular defense against the biological effects of O6-methylguanine (O6-MeG) and O4-methylthymine (O4-MeT) in DNA. Repairs the methylated nucleobase in DNA by stoichiometrically transferring the methyl group to a cysteine residue in the enzyme. This is a suicide reaction: the enzyme is irreversibly inactivated. This is Methylated-DNA--protein-cysteine methyltransferase, constitutive from Bacillus subtilis (strain 168).